Consider the following 469-residue polypeptide: Probable Xaa-Pro aminopeptidase PEPP (469 aa).

Residues Asp264, Asp275, Glu398, and Glu438 each contribute to the Mn(2+) site.

The protein belongs to the peptidase M24B family. The cofactor is Mn(2+).

It catalyses the reaction Release of any N-terminal amino acid, including proline, that is linked to proline, even from a dipeptide or tripeptide.. Its function is as follows. Catalyzes the removal of a penultimate prolyl residue from the N-termini of peptides. This chain is Probable Xaa-Pro aminopeptidase PEPP (PEPP), found in Ajellomyces capsulatus (strain H143) (Darling's disease fungus).